We begin with the raw amino-acid sequence, 193 residues long: Fe/S biogenesis protein NfuA (193 aa).

[4Fe-4S] cluster-binding residues include C149 and C152.

It belongs to the NfuA family. In terms of assembly, homodimer. It depends on [4Fe-4S] cluster as a cofactor.

Functionally, involved in iron-sulfur cluster biogenesis. Binds a 4Fe-4S cluster, can transfer this cluster to apoproteins, and thereby intervenes in the maturation of Fe/S proteins. Could also act as a scaffold/chaperone for damaged Fe/S proteins. The protein is Fe/S biogenesis protein NfuA of Psychromonas ingrahamii (strain DSM 17664 / CCUG 51855 / 37).